Reading from the N-terminus, the 384-residue chain is MFDLNTCLRKNILELQPYRCARDDFSEGVLLDANECAYGSVISVDGVEFNRYPDPRQIEVKQRLCDLRNKELSITKPLTPDNICMGVGSDEIIDSLIRISCIPGKDKILMCPPSYGMYTVSAKINDVEVVKVLLEPDFNLNVDAICETLSKDSAIKVFFACSPGNPTAKALKLEDIKKILEHPTWNGIVVVDEAYIDFSAPDMSALTLVNEYPNLAVCQTLSKSFGLAGIRIGFCLTSKPIATIMNSLKAPYNISEPTSRLALDALSPQSIDKMHTYRDAIIQQRVRLCKELTTIKGMGKIIGGYDANFILIQVLDRPEGGKPSNDAAKYLYLQMATMHKVVVRFRGTEPLCEGALRITVGTEEENTILLKTIKLVLQEYYTKK.

Residue lysine 223 is modified to N6-(pyridoxal phosphate)lysine.

It belongs to the class-II pyridoxal-phosphate-dependent aminotransferase family. The cofactor is pyridoxal 5'-phosphate.

It catalyses the reaction L-histidinol phosphate + 2-oxoglutarate = 3-(imidazol-4-yl)-2-oxopropyl phosphate + L-glutamate. It participates in amino-acid biosynthesis; L-histidine biosynthesis; L-histidine from 5-phospho-alpha-D-ribose 1-diphosphate: step 7/9. This Schizosaccharomyces pombe (strain 972 / ATCC 24843) (Fission yeast) protein is Histidinol-phosphate aminotransferase (his3).